We begin with the raw amino-acid sequence, 364 residues long: tRNA N6-adenosine threonylcarbamoyltransferase (364 aa).

Fe cation contacts are provided by H118 and H122. Residues 140-144 (LVSGG), D173, G186, and N288 each bind substrate. D316 contacts Fe cation.

Belongs to the KAE1 / TsaD family. It depends on Fe(2+) as a cofactor.

Its subcellular location is the cytoplasm. The catalysed reaction is L-threonylcarbamoyladenylate + adenosine(37) in tRNA = N(6)-L-threonylcarbamoyladenosine(37) in tRNA + AMP + H(+). In terms of biological role, required for the formation of a threonylcarbamoyl group on adenosine at position 37 (t(6)A37) in tRNAs that read codons beginning with adenine. Is involved in the transfer of the threonylcarbamoyl moiety of threonylcarbamoyl-AMP (TC-AMP) to the N6 group of A37, together with TsaE and TsaB. TsaD likely plays a direct catalytic role in this reaction. This is tRNA N6-adenosine threonylcarbamoyltransferase from Cereibacter sphaeroides (strain ATCC 17023 / DSM 158 / JCM 6121 / CCUG 31486 / LMG 2827 / NBRC 12203 / NCIMB 8253 / ATH 2.4.1.) (Rhodobacter sphaeroides).